We begin with the raw amino-acid sequence, 565 residues long: MISNDYTKFSSKRRSLRYSNRILLLMGTILLIVVYFYSDILVDKSIIMFRNENKGQMLSGSFTLRHIYRHGVDKGHRTQEVLDITKQNEDAFGRYFKRELDEFNANAVGLNTDDPLRELWTSDKQFITDNPFNFKFGLKGNKQILHRMVDRDPSFIEPYLDFARESPDMAAKVTIDWVEGGEVVVVPDITDKNTVVSLALMSSNAYVRLPYTDDWRNVSLPWDSNDTPGYGWESNGIRGHVFVNDLENIVVISIKGTSAQGLPGSGEDETTGNDKLNDNLLFSCCCARVSYLWTTVCDCYLKSYTCDETCLEQAIKEKDHYYQAAMDIYKDTLRQYPHATIWLTGHSLGGALASLVGRTYGLPTVAFESPGELLAAKRLHLPFPPGLPSYDEGIWHIGHTADPIYMGTCNGASSTCSIAGYAMETGCHSGKQCVYDVVRDKGWHVNMLNHRIHTVIDGILTKYDKVATCHEPDPCVDCYNWNFMPHGKKPKKQTTSSSSEKVDTSTTKSIDRTTITTRTNEKKWHPNPKDPSTTTTDDKTLMSSCLHRNWVGICTEYTTFTKRLI.

Over 1–21 the chain is Cytoplasmic; sequence MISNDYTKFSSKRRSLRYSNR. The helical; Signal-anchor for type II membrane protein transmembrane segment at 22–42 threads the bilayer; sequence ILLLMGTILLIVVYFYSDILV. Over 43-565 the chain is Lumenal; that stretch reads DKSIIMFRNE…EYTTFTKRLI (523 aa). N-linked (GlcNAc...) asparagine glycosylation is present at Asn-217. Ser-347 (charge relay system) is an active-site residue. The disordered stretch occupies residues 488–538; the sequence is KKPKKQTTSSSSEKVDTSTTKSIDRTTITTRTNEKKWHPNPKDPSTTTTDD. The segment covering 493–518 has biased composition (low complexity); it reads QTTSSSSEKVDTSTTKSIDRTTITTR. Residues 519–528 show a composition bias toward basic and acidic residues; it reads TNEKKWHPNP.

It belongs to the AB hydrolase superfamily. Lipase family. Binds to both phosphatidylinositol (PI) and phosphatidylinositol 3,5-bisphosphate (PIP2).

The protein resides in the endosome. The protein localises to the multivesicular body membrane. It is found in the prevacuolar compartment membrane. It catalyses the reaction a triacylglycerol + H2O = a diacylglycerol + a fatty acid + H(+). Lipase which is essential for lysis of subvacuolar cytoplasm to vacuole targeted bodies and intravacuolar autophagic bodies. Involved in the lysis of intravacuolar multivesicular body (MVB) vesicles. The intravacuolar membrane disintegration by ATG15 is critical to life span extension. This is Putative lipase ATG15 (ATG15) from Vanderwaltozyma polyspora (strain ATCC 22028 / DSM 70294 / BCRC 21397 / CBS 2163 / NBRC 10782 / NRRL Y-8283 / UCD 57-17) (Kluyveromyces polysporus).